The chain runs to 482 residues: MDRVSNLPDGVRGHILSFLPAKHIALTSVLSKSWLNLWKLIPILDIDDSEFLHPEEGKAERLEIRQSFVDFVDRVLALQDDSPIDRFSLKCITGIHPDHVNRWICNVLQRGVSDLDLFIDFSYEDTQEDEDMLPQEMFVSKTLVKLKIRNDRCVDWWCGKGGTSLPMLKSLYIDSDLILWGKMKRFLSSFPVLEELRMASMEWKESHETVSSASLRKLSILGTGCEDYVNPKSISFDTPSLLYLNYSDLVAEDYPLVNMGKLLEARINLIVKDDQIKRVREPNNDLLQDDAGNVVLQFGNVVKLMNGIQNIQILYLTADTLEVLSLCCESMPVFNNLKTLGIKSEEGRGWQAVPALLRNCPHLEYLIIEGLLHNVTDKCGDACDCISREDKGRSLASCPVKKVEIQGFRGTMREINMIGHFLRSFKCLKEMGIFPEEEGPTNFENPGAFEYVEKILKLYNEISNCDVYFLVWGYMRRKWTTQ.

In terms of domain architecture, F-box spans 1–47 (MDRVSNLPDGVRGHILSFLPAKHIALTSVLSKSWLNLWKLIPILDID). LRR repeat units lie at residues 122–150 (SYEDTQEDEDMLPQEMFVSKTLVKLKIRN), 175–200 (SDLILWGKMKRFLSSFPVLEELRMAS), 222–248 (GTGCEDYVNPKSISFDTPSLLYLNYSD), 313–344 (ILYLTADTLEVLSLCCESMPVFNNLKTLGIKS), and 345–370 (EEGRGWQAVPALLRNCPHLEYLIIEG).

This is F-box/LRR-repeat protein At3g58930 from Arabidopsis thaliana (Mouse-ear cress).